We begin with the raw amino-acid sequence, 896 residues long: Protein argonaute 9 (896 aa).

A PAZ domain is found at 267–380 (PVVDFLLANQ…FPIEFCNLVS (114 aa)). Residues 550 to 857 (FLLCILAERK…AAAQMGTVMK (308 aa)) form the Piwi domain.

The protein belongs to the argonaute family. Ago subfamily. Expressed in embryonic shoot apex region, pollen and developing ovules.

Involved in RNA-mediated post-transcriptional gene silencing (PTGS). Main component of the RNA-induced silencing complex (RISC) that binds to a short guide RNA such as a microRNA (miRNA) or small interfering RNA (siRNA). RISC uses the mature miRNA or siRNA as a guide for slicer-directed cleavage of homologous mRNAs to repress gene expression. Associates preferentially with small RNAs of 24 nucleotide in length with a 5' terminal adenosine. Interacts with 24 nucleotide sRNAs derived from transposable elements (TEs). Required to silence pericentrometric-located TEs in female gametes and their accessory cells. Necessary to inactivate a significant proportion of long terminal repeat retrotransposons (LTRs) in the ovule. Required to specify cell fate in ovule. Involved in the control of female gamete formation by restricting the specification of gametophyte precursors in a dosage-dependent, non-cell-autonomous manner. Targeted by turnip yellows virus (TuYV) protein P0 (via F-box-like domain) for probable proteasome degradation and thereby inactivating AGO9 function in RNA silencing. This Arabidopsis thaliana (Mouse-ear cress) protein is Protein argonaute 9 (AGO9).